A 343-amino-acid polypeptide reads, in one-letter code: Phosphate acyltransferase (343 aa).

Belongs to the PlsX family. Homodimer. Probably interacts with PlsY.

Its subcellular location is the cytoplasm. The enzyme catalyses a fatty acyl-[ACP] + phosphate = an acyl phosphate + holo-[ACP]. The protein operates within lipid metabolism; phospholipid metabolism. Its function is as follows. Catalyzes the reversible formation of acyl-phosphate (acyl-PO(4)) from acyl-[acyl-carrier-protein] (acyl-ACP). This enzyme utilizes acyl-ACP as fatty acyl donor, but not acyl-CoA. The chain is Phosphate acyltransferase from Limosilactobacillus reuteri (strain DSM 20016) (Lactobacillus reuteri).